Consider the following 637-residue polypeptide: Chaperone protein HtpG (637 aa).

The interval Met1 to Arg338 is a; substrate-binding. The b stretch occupies residues Glu339–Lys552. A c region spans residues Ile553–Asp637.

It belongs to the heat shock protein 90 family. In terms of assembly, homodimer.

It is found in the cytoplasm. Its function is as follows. Molecular chaperone. Has ATPase activity. The chain is Chaperone protein HtpG from Nitrobacter winogradskyi (strain ATCC 25391 / DSM 10237 / CIP 104748 / NCIMB 11846 / Nb-255).